The chain runs to 304 residues: UDP-N-acetylenolpyruvoylglucosamine reductase (304 aa).

The FAD-binding PCMH-type domain maps to 33–213 (IGGPADIMVI…LEITRDLTER (181 aa)). Arginine 177 is a catalytic residue. Residue serine 227 is the Proton donor of the active site. Glutamate 297 is an active-site residue.

It belongs to the MurB family. FAD is required as a cofactor.

The protein localises to the cytoplasm. The catalysed reaction is UDP-N-acetyl-alpha-D-muramate + NADP(+) = UDP-N-acetyl-3-O-(1-carboxyvinyl)-alpha-D-glucosamine + NADPH + H(+). Its pathway is cell wall biogenesis; peptidoglycan biosynthesis. Its function is as follows. Cell wall formation. This chain is UDP-N-acetylenolpyruvoylglucosamine reductase, found in Alkaliphilus oremlandii (strain OhILAs) (Clostridium oremlandii (strain OhILAs)).